Reading from the N-terminus, the 177-residue chain is ATP synthase subunit delta (177 aa).

It belongs to the ATPase delta chain family. In terms of assembly, F-type ATPases have 2 components, F(1) - the catalytic core - and F(0) - the membrane proton channel. F(1) has five subunits: alpha(3), beta(3), gamma(1), delta(1), epsilon(1). F(0) has three main subunits: a(1), b(2) and c(10-14). The alpha and beta chains form an alternating ring which encloses part of the gamma chain. F(1) is attached to F(0) by a central stalk formed by the gamma and epsilon chains, while a peripheral stalk is formed by the delta and b chains.

The protein resides in the cell inner membrane. In terms of biological role, f(1)F(0) ATP synthase produces ATP from ADP in the presence of a proton or sodium gradient. F-type ATPases consist of two structural domains, F(1) containing the extramembraneous catalytic core and F(0) containing the membrane proton channel, linked together by a central stalk and a peripheral stalk. During catalysis, ATP synthesis in the catalytic domain of F(1) is coupled via a rotary mechanism of the central stalk subunits to proton translocation. This protein is part of the stalk that links CF(0) to CF(1). It either transmits conformational changes from CF(0) to CF(1) or is implicated in proton conduction. The sequence is that of ATP synthase subunit delta from Shigella flexneri.